Reading from the N-terminus, the 470-residue chain is Bifunctional protein ArgHA (470 aa).

Positions 1–470 are argininosuccinate lyase; it reads MALWGGRFSQ…TSGISIRAAR (470 aa).

The protein in the N-terminal section; belongs to the lyase 1 family. Argininosuccinate lyase subfamily. This sequence in the C-terminal section; belongs to the acetyltransferase family. ArgA subfamily.

It localises to the cytoplasm. The enzyme catalyses 2-(N(omega)-L-arginino)succinate = fumarate + L-arginine. The catalysed reaction is L-glutamate + acetyl-CoA = N-acetyl-L-glutamate + CoA + H(+). The protein operates within amino-acid biosynthesis; L-arginine biosynthesis; N(2)-acetyl-L-ornithine from L-glutamate: step 1/4. It participates in amino-acid biosynthesis; L-arginine biosynthesis; L-arginine from L-ornithine and carbamoyl phosphate: step 3/3. In Moritella profunda, this protein is Bifunctional protein ArgHA (argHA).